A 546-amino-acid chain; its full sequence is MTPKEFKRLYRIITILLEQGIDELVPARYQPWPGRLARRSLFWLKKKQPDLSRGARIRLAFEALGPIFIKFGQMLSTRRDLLPPDIAEELAMLQDRVPPFCGQAARLKIEESLGCPVETLFDDFDETPLASASIAQVHTGRLKENGREIVIKVIRPDIEPVIEADLRLMQTLARLVARFVPQSARLRPIEVVEEYRKTILDELNLMREAANAIQLRRNFTGSDALYVPEVFTEHCREHVLVMERIYGIPVSDIPALEANGTNMKLLAERGVEVFFTQVFRDSFFHADMHPGNIFVSYEHPDNPLWIGIDCGIVGTLNREDKRYLAENFLAFFNRDYRRVAELHVESGWVPPDTKVDEFEFAIRTVLEPIFEKPLSEISFGHVLLNLFNTARRFNMAVQPQLVLLQKTLLYVEGLGRQLYPQLDLWQTAKPYLENWMHEQVGPKAVWNAIKEKAPFWAEKLPELPELVYETLRQTRHQQRHFDQMFADFRRHSRRQGQARYLLGVGASLLLVGVFLLTQKQHIEWGQISLAGAGLCWLLGWFKARSH.

In terms of domain architecture, Protein kinase spans 123–501 (DFDETPLASA…SRRQGQARYL (379 aa)). ATP contacts are provided by residues 129-137 (LASASIAQV) and Lys152. Asp287 (proton acceptor) is an active-site residue. Transmembrane regions (helical) follow at residues 496 to 516 (GQAR…VFLL) and 521 to 541 (HIEW…LGWF).

It belongs to the ABC1 family. UbiB subfamily.

It localises to the cell inner membrane. Its pathway is cofactor biosynthesis; ubiquinone biosynthesis [regulation]. Its function is as follows. Is probably a protein kinase regulator of UbiI activity which is involved in aerobic coenzyme Q (ubiquinone) biosynthesis. This chain is Probable protein kinase UbiB, found in Aeromonas salmonicida (strain A449).